The chain runs to 213 residues: Thymidylate kinase (213 aa).

Residue 7-14 coordinates ATP; the sequence is GMDGSGKT.

Belongs to the thymidylate kinase family.

The catalysed reaction is dTMP + ATP = dTDP + ADP. Phosphorylation of dTMP to form dTDP in both de novo and salvage pathways of dTTP synthesis. This chain is Thymidylate kinase, found in Mycoplasma capricolum subsp. capricolum (strain California kid / ATCC 27343 / NCTC 10154).